The following is a 414-amino-acid chain: MEMQQNCSISCFWETQPLGCVKISCIFYHSKPRNINGLFLPPSSNITLQKESQEGIPLQTQSQEPLKPQENISRPIHHPLVLKTNFEEEEEVDEQNDASSLWTKTPEEIEEKRAIKEMCYKSGEYYRFHTPPDILSSKSMAPTAEKELEKPLENGSELQEGDSLTVPTKLSQYERQGEIKTSLHGKPKTDIAAFENGGGDCYVPQRVIFLGVDESEALTEEKEITISKCSNTKDNKDSPHPKRSLTTRLVPTTHVLNATENISMKCREDPSSMNDVQPVKKPHFKGVKKRKWIYDEPKNFPDSGMRRAVQTPSPQNKMSYHRNNKNRNAENASYIHVQRDAVRTVALNAPPHSRPMHGSYNKVHVNKEPKPNLSPDKYMSTSYNDSAWRKRIPFSKTYSKSGKIYPEPRRNGSK.

Disordered regions lie at residues 136–168 (SSKSMAPTAEKELEKPLENGSELQEGDSLTVPT), 298–322 (KNFPDSGMRRAVQTPSPQNKMSYHR), and 350–382 (PPHSRPMHGSYNKVHVNKEPKPNLSPDKYMSTS).

This is an uncharacterized protein from Macaca fascicularis (Crab-eating macaque).